The chain runs to 616 residues: Protein cereblon (616 aa).

Disordered regions lie at residues 1 to 39 (MDEEETAEINAQEQEVAGSAGEAAAGPSGAEVQPNDDSV), 63 to 137 (FGPS…AMPR), and 182 to 220 (SQERRRSRNSDEVSPEAEDDELPEHPPPPPPRPPIDIDM). Low complexity predominate over residues 11–32 (AQEQEVAGSAGEAAAGPSGAEV). Residues 96–107 (SEEDIVLDDGTE) are compositionally biased toward acidic residues. Residues 183-192 (QERRRSRNSD) show a composition bias toward basic and acidic residues. Acidic residues predominate over residues 194-203 (VSPEAEDDEL). Pro residues predominate over residues 206–215 (HPPPPPPRPP). The region spanning 257-482 (HMLIFLHQYI…LIGGILKEET (226 aa)) is the Lon N-terminal domain. The 110-residue stretch at 481 to 590 (ETLFYCRYCN…LAGSSVRIGK (110 aa)) folds into the CULT domain. Residues C486, C489, C555, and C558 each contribute to the Zn(2+) site.

It belongs to the CRBN family. In terms of assembly, likely a component of a DCX (DDB1-CUL4-X-box) protein ligase complex. May interact with pic/DDB1. In terms of processing, ubiquitinated.

The protein localises to the nucleus. It participates in protein modification; protein ubiquitination. In terms of biological role, substrate recognition component of a DCX (DDB1-CUL4-X-box) E3 protein ligase complex that mediates the ubiquitination and subsequent proteasomal degradation of target proteins. Has an essential role in mediating growth by negatively regulating insulin signaling. It also has a role in maintaining presynaptic function in the neuromuscular junction synapses of third-instar larvae. This chain is Protein cereblon, found in Drosophila pseudoobscura pseudoobscura (Fruit fly).